The chain runs to 861 residues: Probable linoleate 9S-lipoxygenase 3 (861 aa).

The PLAT domain maps to phenylalanine 33 to alanine 160. The 699-residue stretch at proline 163 to isoleucine 861 folds into the Lipoxygenase domain. The disordered stretch occupies residues threonine 220–glutamate 247. Fe cation is bound by residues histidine 522, histidine 527, histidine 713, asparagine 717, and isoleucine 861.

Belongs to the lipoxygenase family. As to quaternary structure, monomer. Fe cation serves as cofactor. In terms of tissue distribution, expressed in tubers and roots. Not detected in leaves, flowers, stems, shoot tips, or axillary buds.

Its subcellular location is the cytoplasm. The catalysed reaction is (9Z,12Z)-octadecadienoate + O2 = (9S)-hydroperoxy-(10E,12Z)-octadecadienoate. Its pathway is lipid metabolism; oxylipin biosynthesis. In terms of biological role, plant lipoxygenases may be involved in a number of diverse aspects of plant physiology including growth and development, pest resistance, and senescence or responses to wounding. Catalyzes the hydroperoxidation of lipids containing a cis,cis-1,4-pentadiene structure. The chain is Probable linoleate 9S-lipoxygenase 3 (LOX1.3) from Solanum tuberosum (Potato).